Here is a 60-residue protein sequence, read N- to C-terminus: uncharacterized protein (60 aa).

An N-terminal signal peptide occupies residues 1–21; it reads MNKLLKLFFITIIIYNNIAFA.

This is an uncharacterized protein from Rickettsia prowazekii (strain Madrid E).